The chain runs to 262 residues: ELL-associated factor 2 (262 aa).

The necessary for interaction with ELL stretch occupies residues 17-104 (LKLGESFEKQ…TGECRLEKLS (88 aa)). Residues 124 to 144 (LEQQQQQMWNPPRTSNLVQHS) are compositionally biased toward polar residues. 2 disordered regions span residues 124 to 154 (LEQQ…SPTS) and 170 to 232 (MDQM…ADTT). Phosphoserine is present on residues Ser146, Ser151, and Ser154. The segment covering 174 to 192 (SSCDSSSDSRSSSSSSSED) has biased composition (low complexity). Residues 177–262 (DSSSDSRSSS…LSESDSDSED (86 aa)) form a necessary for transactivation activity region. Residues 248-262 (RSDLQLSESDSDSED) are necessary for interaction with TCEA1 and transactivation activity.

This sequence belongs to the EAF family. Component of the super elongation complex (SEC), at least composed of EAF1, EAF2, CDK9, MLLT3/AF9, AFF (AFF1 or AFF4), the P-TEFb complex and ELL (ELL, ELL2 or ELL3). Interacts with ELL, ELL2 and TCEA1.

Its subcellular location is the nucleus speckle. In terms of biological role, acts as a transcriptional transactivator of ELL, ELL2 and TCEA1 elongation activities. Potent inducer of apoptosis in prostatic and non-prostatic cell lines. This chain is ELL-associated factor 2 (Eaf2), found in Rattus norvegicus (Rat).